The following is a 460-amino-acid chain: Notoamide biosynthesis cluster transcriptional coactivator notR (460 aa).

In terms of domain architecture, HTH iclR-type spans 74 to 145 (LQDLARQVEI…EPMPNYVSHT (72 aa)). The segment at residues 107-126 (IQDLADLAGVPDIQLRRVIR) is a DNA-binding region (H-T-H motif). Positions 300–320 (TRDFTPQPESSPRPGSASSRV) are disordered.

It localises to the nucleus. In terms of biological role, transcription factor that probably regulates the expression of the gene cluster that mediates the biosynthesis of notoamide, a fungal indole alkaloid that belongs to a family of natural products containing a characteristic bicyclo[2.2.2]diazaoctane core. In Aspergillus sp. (strain MF297-2), this protein is Notoamide biosynthesis cluster transcriptional coactivator notR.